Here is a 520-residue protein sequence, read N- to C-terminus: D-aminopeptidase (520 aa).

Serine 62 serves as the catalytic Nucleophile. Lysine 65 functions as the Proton donor/acceptor in the catalytic mechanism. Residues 477–487 (QRSMDAPSPGE) form an important for specificity region. A substrate-binding site is contributed by aspartate 481.

The protein belongs to the peptidase S12 family. Homodimer.

The catalysed reaction is Release of an N-terminal D-amino acid from a peptide, Xaa-|-Yaa-, in which Xaa is preferably D-Ala, D-Ser or D-Thr. D-amino acid amides and methyl esters also are hydrolyzed, as is glycine amide.. Its activity is regulated as follows. Inhibited by beta-lactam compounds such as 6-aminopenicillic acid, 7-aminocephalosporanic acid, benzylpenicillin and ampicillin. Inhibited by p-chloromercuribenzoate. Functionally, hydrolyzes N-terminal residues in D-amino acid-containing peptides. This Brucella anthropi (Ochrobactrum anthropi) protein is D-aminopeptidase (dap).